The sequence spans 102 residues: Circadian clock oscillator protein KaiB (102 aa).

The protein belongs to the KaiB family. In terms of assembly, undergoes a major conformational rearrangment; in the free state forms homotetramers with 2 dimers. When bound to the CI domain of KaiC switches to a monomeric thioredoxin-fold (KaiB(fs)). Monomers, homodimers and homotetramers are detected in solution; at low concentrations only monomers are seen. In vitro forms KaiC(6):KaiB(1) and KaiC(6):KaiB(6) complexes. Only associates with 'Ser-431'-phosphorylated KaiC (and not with doubly phosphorylated KaiC). Complex formation between KaiB and KaiC is regulated by the phosphorylation state of KaiC and by an ATP hydrolysis-driven conformation change in the CI ring of KaiC; complex formation is slow. Slow complex formation is crucial for the timing of the circadian period. In low resolution cryo-EM forms a KaiC(6):KaiB(6) complex. The KaiABC complex composition changes during the circadian cycle to control KaiC phosphorylation. Complexes KaiC(6), KaiA(2-4):KaiC(6), KaiB(6):KaiC(6) and KaiC(6):KaiB(6):KaiA(12) are among the most important forms, many form cooperatively. The KaiB:KaiC complex is more prevalent at 16 hours (in the dark) than at 4 hours (in the light) in the circadian cycle. The KaiA:KaiB complex is only found at 20-24 hours in the circadian cycle (subjective night). Binds to the CI domain of KaiC; SasA and KaiB compete to bind to the CI domain.

It is found in the cytoplasm. It localises to the cell membrane. In terms of biological role, key component of the KaiABC oscillator complex, which constitutes the main circadian regulator in cyanobacteria. Complex composition changes during the circadian cycle to control KaiC phosphorylation. KaiA stimulates KaiC autophosphorylation, while KaiB sequesters KaiA, leading to KaiC autodephosphorylation. KaiA binding to the KaiC CII domain yields KaiA(2-4):KaiC(6) complexes which stimulate KaiC autophosphorylation. Phospho-Ser-431 KaiC accumulation triggers binding of KaiB to form the KaiB(6):KaiC(6) complex, leading to changes in the output regulators CikA and SasA. KaiB switches to a thioredoxin-like fold (KaiB(fs)) in complex with KaiC. KaiB(6):KaiC(6) formation exposes a site for KaiA binding that sequesters KaiA from the CII domain, making the KaiC(6):KaiB(6):KaiA(12) complex that results in KaiC autodephosphorylation. Complete dephosphorylation of KaiC leads to dissociation of KaiA(2):KaiB(1), completing 1 cycle of the Kai oscillator. Functionally, circadian oscillations can be generated in vitro by incubating KaiA, KaiB and KaiC with 1 mM ATP. The cycle is self-sustainable for at least 3 cycles and resistant to temperature changes. A very robust clock is reconstituted with KaiA, KaiB, KaiC, SasA, CikA and RpaA; output is measured by transcription from an appropriate reporter. Its function is as follows. A metamorphic protein which reversibly switches between an inactive tetrameric fold and a rare, thioredoxin-like monomeric fold (KaiB(fs)). KaiB(fs) binds phospho-KaiC, KaiA and CikA. KaiA and CikA compete for binding to KaiB(fs), and KaiB(fs) and SasA compete for binding to KaiC, thus the clock oscillator and output signal pathway are tightly coupled. The sequence is that of Circadian clock oscillator protein KaiB from Synechococcus elongatus (strain ATCC 33912 / PCC 7942 / FACHB-805) (Anacystis nidulans R2).